A 397-amino-acid polypeptide reads, in one-letter code: Odorant receptor 85a (397 aa).

Topologically, residues 1-46 are cytoplasmic; sequence MIFKYIQEPVLGSLFRSRDSLIYLNRSIDQMGWRLPPRTKPYWWLY. Residues 47–67 traverse the membrane as a helical segment; it reads YIWTLVVIVLVFIFIPYGLIM. Over 68 to 83 the chain is Extracellular; the sequence is TGIKEFKNFTTTDLFT. N-linked (GlcNAc...) asparagine glycosylation is present at N75. A helical membrane pass occupies residues 84-104; the sequence is YVQVPVNTNASIMKGIIVLFM. Topologically, residues 105–142 are cytoplasmic; that stretch reads RRRFSRAQKMMDAMDIRCTKMEEKVQVHRAAALCNRVV. Residues 143–163 form a helical membrane-spanning segment; sequence VIYHCIYFGYLSMALTGALVI. The Extracellular portion of the chain corresponds to 164 to 192; the sequence is GKTPFCLYNPLVNPDDHFYLATAIESVTM. The chain crosses the membrane as a helical span at residues 193 to 213; it reads AGIILANLILDVYPIIYVVVL. Residues 214-262 lie on the Cytoplasmic side of the membrane; that stretch reads RIHMELLSERIKTLRTDVEKGDDQHYAELVECVKDHKLIVEYGNTLRPM. The helical transmembrane segment at 263 to 283 threads the bilayer; sequence ISATMFIQLLSVGLLLGLAAV. Residues 284–294 lie on the Extracellular side of the membrane; that stretch reads SMQFYNTVMER. A helical transmembrane segment spans residues 295–315; the sequence is VVSGVYTIAILSQTFPFCYVC. The Cytoplasmic portion of the chain corresponds to 316 to 347; it reads EQLSSDCESLTNTLFHSKWIGAERRYRTTMLY. Residues 348-368 traverse the membrane as a helical segment; sequence FIHNVQQSILFTAGGIFPICL. Residues 369–397 lie on the Extracellular side of the membrane; that stretch reads NTNIKMAKFAFSVVTIVNEMDLAEKLRRE.

It belongs to the insect chemoreceptor superfamily. Heteromeric odorant receptor channel (TC 1.A.69) family. Or2a subfamily. As to quaternary structure, interacts with Orco. Complexes exist early in the endomembrane system in olfactory sensory neurons (OSNs), coupling these complexes to the conserved ciliary trafficking pathway. In terms of tissue distribution, expressed in olfactory sensory neurons in the antenna.

The protein localises to the cell membrane. Functionally, odorant receptor which mediates acceptance or avoidance behavior, depending on its substrates. The odorant receptor repertoire encodes a large collection of odor stimuli that vary widely in identity, intensity, and duration. May form a complex with Orco to form odorant-sensing units, providing sensitive and prolonged odorant signaling and calcium permeability. The sequence is that of Odorant receptor 85a (Or85a) from Drosophila melanogaster (Fruit fly).